Consider the following 77-residue polypeptide: DNA-directed RNA polymerase subunit omega (77 aa).

It belongs to the RNA polymerase subunit omega family. The RNAP catalytic core consists of 2 alpha, 1 beta, 1 beta' and 1 omega subunit. When a sigma factor is associated with the core the holoenzyme is formed, which can initiate transcription.

It catalyses the reaction RNA(n) + a ribonucleoside 5'-triphosphate = RNA(n+1) + diphosphate. Its function is as follows. Promotes RNA polymerase assembly. Latches the N- and C-terminal regions of the beta' subunit thereby facilitating its interaction with the beta and alpha subunits. The polypeptide is DNA-directed RNA polymerase subunit omega (Nitratidesulfovibrio vulgaris (strain ATCC 29579 / DSM 644 / CCUG 34227 / NCIMB 8303 / VKM B-1760 / Hildenborough) (Desulfovibrio vulgaris)).